We begin with the raw amino-acid sequence, 445 residues long: N-succinylarginine dihydrolase (445 aa).

Residues 19 to 28, Asn-110, and 137 to 138 each bind substrate; these read AGLSFGNVAS and HR. Glu-174 is a catalytic residue. Arg-214 serves as a coordination point for substrate. His-250 is a catalytic residue. 2 residues coordinate substrate: Asp-252 and Asn-363. Cys-369 serves as the catalytic Nucleophile.

The protein belongs to the succinylarginine dihydrolase family. As to quaternary structure, homodimer.

The catalysed reaction is N(2)-succinyl-L-arginine + 2 H2O + 2 H(+) = N(2)-succinyl-L-ornithine + 2 NH4(+) + CO2. It functions in the pathway amino-acid degradation; L-arginine degradation via AST pathway; L-glutamate and succinate from L-arginine: step 2/5. In terms of biological role, catalyzes the hydrolysis of N(2)-succinylarginine into N(2)-succinylornithine, ammonia and CO(2). The protein is N-succinylarginine dihydrolase of Shewanella woodyi (strain ATCC 51908 / MS32).